The sequence spans 150 residues: MQNSEFKYLIRVSRTDLDGNKKLIMALQDIYGVGEAMARAIVRVAKLDPNKLAGYLTEEEVKKIEEVLADPAKFGIPSWMFNRRKDYVTGEDKHVIESDLMIIKQEDINRLKRIRCYRGIRHELGLPCRGQRTKSTFRRGPTVGVSRRKK.

The segment at 131–150 (QRTKSTFRRGPTVGVSRRKK) is disordered.

It belongs to the universal ribosomal protein uS13 family. In terms of assembly, part of the 30S ribosomal subunit. Forms a loose heterodimer with protein S19. Forms two bridges to the 50S subunit in the 70S ribosome.

Its function is as follows. Located at the top of the head of the 30S subunit, it contacts several helices of the 16S rRNA. In the 70S ribosome it contacts the 23S rRNA (bridge B1a) and protein L5 of the 50S subunit (bridge B1b), connecting the 2 subunits; these bridges are implicated in subunit movement. This is Small ribosomal subunit protein uS13 from Methanocaldococcus jannaschii (strain ATCC 43067 / DSM 2661 / JAL-1 / JCM 10045 / NBRC 100440) (Methanococcus jannaschii).